We begin with the raw amino-acid sequence, 202 residues long: Indolepyruvate oxidoreductase subunit IorB (202 aa).

As to quaternary structure, heterodimer of the IorA and IorB subunits.

It catalyses the reaction indole-3-pyruvate + 2 oxidized [2Fe-2S]-[ferredoxin] + CoA = (indol-3-yl)acetyl-CoA + 2 reduced [2Fe-2S]-[ferredoxin] + CO2 + H(+). In terms of biological role, catalyzes the ferredoxin-dependent oxidative decarboxylation of arylpyruvates. The polypeptide is Indolepyruvate oxidoreductase subunit IorB (iorB) (Thermococcus kodakarensis (strain ATCC BAA-918 / JCM 12380 / KOD1) (Pyrococcus kodakaraensis (strain KOD1))).